A 260-amino-acid polypeptide reads, in one-letter code: tRNA (guanine-N(1)-)-methyltransferase (260 aa).

Residues glycine 117 and 137 to 142 contribute to the S-adenosyl-L-methionine site; that span reads LGDFVL.

The protein belongs to the RNA methyltransferase TrmD family. Homodimer.

It is found in the cytoplasm. The catalysed reaction is guanosine(37) in tRNA + S-adenosyl-L-methionine = N(1)-methylguanosine(37) in tRNA + S-adenosyl-L-homocysteine + H(+). Specifically methylates guanosine-37 in various tRNAs. This Cupriavidus taiwanensis (strain DSM 17343 / BCRC 17206 / CCUG 44338 / CIP 107171 / LMG 19424 / R1) (Ralstonia taiwanensis (strain LMG 19424)) protein is tRNA (guanine-N(1)-)-methyltransferase.